Consider the following 439-residue polypeptide: Arginine biosynthesis bifunctional protein ArgJ, mitochondrial (439 aa).

Substrate is bound by residues Thr175, Lys201, Thr212, Glu301, Asn434, and Ser439. The active-site Nucleophile is Thr212.

The protein belongs to the ArgJ family. Heterodimer of an alpha and a beta chain. In terms of processing, the alpha and beta chains are autoproteolytically processed from a single precursor protein within the mitochondrion.

It localises to the mitochondrion matrix. It catalyses the reaction N(2)-acetyl-L-ornithine + L-glutamate = N-acetyl-L-glutamate + L-ornithine. The catalysed reaction is L-glutamate + acetyl-CoA = N-acetyl-L-glutamate + CoA + H(+). It participates in amino-acid biosynthesis; L-arginine biosynthesis; L-ornithine and N-acetyl-L-glutamate from L-glutamate and N(2)-acetyl-L-ornithine (cyclic): step 1/1. The protein operates within amino-acid biosynthesis; L-arginine biosynthesis; N(2)-acetyl-L-ornithine from L-glutamate: step 1/4. Catalyzes two activities which are involved in the cyclic version of arginine biosynthesis: the synthesis of acetylglutamate from glutamate and acetyl-CoA, and of ornithine by transacetylation between acetylornithine and glutamate. The protein is Arginine biosynthesis bifunctional protein ArgJ, mitochondrial of Candida albicans (strain WO-1) (Yeast).